An 820-amino-acid chain; its full sequence is Phenylalanine--tRNA ligase beta subunit (820 aa).

Positions 42-154 constitute a tRNA-binding domain; the sequence is KGGLEGLVIG…AEAVPGTLAK (113 aa). Residues 413-489 enclose the B5 domain; that stretch reads PQDFMVELSY…RIYGYNNVEI (77 aa). Residues D467, D473, E476, and D477 each contribute to the Mg(2+) site. Positions 727–820 constitute an FDX-ACB domain; sequence SKFPAVKRDL…LEDKLNAKLR (94 aa).

This sequence belongs to the phenylalanyl-tRNA synthetase beta subunit family. Type 1 subfamily. Tetramer of two alpha and two beta subunits. Mg(2+) is required as a cofactor.

The protein localises to the cytoplasm. It catalyses the reaction tRNA(Phe) + L-phenylalanine + ATP = L-phenylalanyl-tRNA(Phe) + AMP + diphosphate + H(+). This Bacteroides thetaiotaomicron (strain ATCC 29148 / DSM 2079 / JCM 5827 / CCUG 10774 / NCTC 10582 / VPI-5482 / E50) protein is Phenylalanine--tRNA ligase beta subunit.